The chain runs to 259 residues: Hemin import ATP-binding protein HmuV (259 aa).

The ABC transporter domain occupies 6–242 (IQGRDLCVTY…ERIEQVYGYQ (237 aa)). Position 38 to 45 (38 to 45 (GPNGAGKS)) interacts with ATP.

The protein belongs to the ABC transporter superfamily. Heme (hemin) importer (TC 3.A.1.14.5) family. As to quaternary structure, the complex is composed of two ATP-binding proteins (HmuV), two transmembrane proteins (HmuU) and a solute-binding protein (HmuT).

The protein resides in the cell inner membrane. Part of the ABC transporter complex HmuTUV involved in hemin import. Responsible for energy coupling to the transport system. In Vibrio cholerae serotype O1 (strain ATCC 39315 / El Tor Inaba N16961), this protein is Hemin import ATP-binding protein HmuV.